We begin with the raw amino-acid sequence, 178 residues long: Putative type II secretion system M-type protein YghD (178 aa).

Residues 1-39 are Cytoplasmic-facing; the sequence is MLRDKFIHYFQQWRERQLSRGEHWLAQHLAGRSPREKGM. Residues 40-60 traverse the membrane as a helical segment; that stretch reads LLAAVVFLFSVGYYVLIWQPL. Residues 61-178 are Periplasmic-facing; the sequence is SERIEQQETI…NVQRLEFGRG (118 aa).

It belongs to the GSP M family.

The protein resides in the cell inner membrane. Involved in a type II secretion system (T2SS, formerly general secretion pathway, GSP) for the export of folded proteins across the outer membrane. The chain is Putative type II secretion system M-type protein YghD (yghD) from Escherichia coli (strain K12).